The chain runs to 89 residues: Small ribosomal subunit protein uS15 (89 aa).

The protein belongs to the universal ribosomal protein uS15 family. As to quaternary structure, part of the 30S ribosomal subunit. Forms a bridge to the 50S subunit in the 70S ribosome, contacting the 23S rRNA.

One of the primary rRNA binding proteins, it binds directly to 16S rRNA where it helps nucleate assembly of the platform of the 30S subunit by binding and bridging several RNA helices of the 16S rRNA. Its function is as follows. Forms an intersubunit bridge (bridge B4) with the 23S rRNA of the 50S subunit in the ribosome. This is Small ribosomal subunit protein uS15 from Cereibacter sphaeroides (strain ATCC 17025 / ATH 2.4.3) (Rhodobacter sphaeroides).